A 435-amino-acid polypeptide reads, in one-letter code: Serine--tRNA ligase (435 aa).

The tract at residues 41-70 is disordered; it reads QVKTEELQAQRNSRSKSIGQAKAKGDHEEA. Polar residues predominate over residues 49 to 58; sequence AQRNSRSKSI. Residue 242-244 coordinates L-serine; it reads TAE. 273-275 contacts ATP; that stretch reads RSE. E296 is a binding site for L-serine. An ATP-binding site is contributed by 360–363; sequence EISS. Residue S396 participates in L-serine binding.

This sequence belongs to the class-II aminoacyl-tRNA synthetase family. Type-1 seryl-tRNA synthetase subfamily. As to quaternary structure, homodimer. The tRNA molecule binds across the dimer.

It localises to the cytoplasm. The enzyme catalyses tRNA(Ser) + L-serine + ATP = L-seryl-tRNA(Ser) + AMP + diphosphate + H(+). It catalyses the reaction tRNA(Sec) + L-serine + ATP = L-seryl-tRNA(Sec) + AMP + diphosphate + H(+). It participates in aminoacyl-tRNA biosynthesis; selenocysteinyl-tRNA(Sec) biosynthesis; L-seryl-tRNA(Sec) from L-serine and tRNA(Sec): step 1/1. Catalyzes the attachment of serine to tRNA(Ser). Is also able to aminoacylate tRNA(Sec) with serine, to form the misacylated tRNA L-seryl-tRNA(Sec), which will be further converted into selenocysteinyl-tRNA(Sec). The protein is Serine--tRNA ligase of Aliivibrio fischeri (strain ATCC 700601 / ES114) (Vibrio fischeri).